Reading from the N-terminus, the 303-residue chain is N-acetyl-D-glucosamine kinase (303 aa).

Residues 4–11 (GFDIGGTK) and 133–140 (GVGGGLIF) contribute to the ATP site. 4 residues coordinate Zn(2+): His-157, Cys-177, Cys-179, and Cys-184.

This sequence belongs to the ROK (NagC/XylR) family. NagK subfamily.

It carries out the reaction N-acetyl-D-glucosamine + ATP = N-acetyl-D-glucosamine 6-phosphate + ADP + H(+). It participates in cell wall biogenesis; peptidoglycan recycling. Functionally, catalyzes the phosphorylation of N-acetyl-D-glucosamine (GlcNAc) derived from cell-wall degradation, yielding GlcNAc-6-P. The polypeptide is N-acetyl-D-glucosamine kinase (Escherichia fergusonii (strain ATCC 35469 / DSM 13698 / CCUG 18766 / IAM 14443 / JCM 21226 / LMG 7866 / NBRC 102419 / NCTC 12128 / CDC 0568-73)).